The following is a 737-amino-acid chain: MADEVALALQAAGSPSAAAAMEAASQPADEPLRKRPRRDGPGLGRSPGEPSAAVAPAAAGCEAASAAAPAALWREAAGAAASAEREAPATAVAGDGDNGSGLRREPRAADDFDDDEGEEEDEAAAAAAAAAIGYRDNLLLTDGLLTNGFHSCESDDDDRTSHASSSDWTPRPRIGPYTFVQQHLMIGTDPRTILKDLLPETIPPPELDDMTLWQIVINILSEPPKRKKRKDINTIEDAVKLLQECKKIIVLTGAGVSVSCGIPDFRSRDGIYARLAVDFPDLPDPQAMFDIEYFRKDPRPFFKFAKEIYPGQFQPSLCHKFIALSDKEGKLLRNYTQNIDTLEQVAGIQRILQCHGSFATASCLICKYKVDCEAVRGDIFNQVVPRCPRCPADEPLAIMKPEIVFFGENLPEQFHRAMKYDKDEVDLLIVIGSSLKVRPVALIPSSIPHEVPQILINREPLPHLHFDVELLGDCDVIINELCHRLGGEYAKLCCNPVKLSEITEKPPRPQKELVHLSELPPTPLHISEDSSSPERTVPQDSSVIATLVDQATNNNVNDLEVSESSCVEEKPQEVQTSRNVENINVENPDFKAVGSSTADKNERTSVAETVRKCWPNRLAKEQISKRLEGNQYLFVPPNRYIFHGAEVYSDSEDDVLSSSSCGSNSDSGTCQSPSLEEPLEDESEIEEFYNGLEDDTERPECAGGSGFGADGGDQEVVNEAIATRQELTDVNYPSDKS.

The span at 1–28 (MADEVALALQAAGSPSAAAAMEAASQPA) shows a compositional bias: low complexity. Disordered stretches follow at residues 1–56 (MADE…AVAP) and 75–125 (EAAG…EAAA). At Ala-2 the chain carries N-acetylalanine. The segment at 2–131 (ADEVALALQA…EAAAAAAAAA (130 aa)) is interaction with CLOCK. The interval 2-268 (ADEVALALQA…SCGIPDFRSR (267 aa)) is interaction with H1-4. Phosphoserine occurs at positions 14 and 25. Residues 32-39 (LRKRPRRD) carry the Nuclear localization signal motif. Ser-46 carries the post-translational modification Phosphoserine; by MAPK8. Composition is skewed to low complexity over residues 46–56 (SPGEPSAAVAP) and 75–94 (EAAG…AVAG). A compositionally biased stretch (acidic residues) spans 111-123 (DFDDDEGEEEDEA). The interval 135 to 533 (RDNLLLTDGL…LHISEDSSSP (399 aa)) is interaction with CCAR2. The Nuclear export signal signature appears at 138–145 (LLLTDGLL). A phosphoserine mark is found at Ser-151, Ser-154, Ser-164, and Ser-165. Positions 152-171 (CESDDDDRTSHASSSDWTPR) are disordered. The Nuclear localization signal signature appears at 223-230 (PPKRKKRK). Positions 228-488 (KRKDINTIED…NELCHRLGGE (261 aa)) constitute a Deacetylase sirtuin-type domain. N6-acetyllysine is present on Lys-230. The tract at residues 248-251 (IIVL) is required for interaction with the sumoylated form of CCAR2. NAD(+)-binding positions include 253 to 272 (GAGV…DGIY) and 337 to 340 (QNID). The active-site Proton acceptor is the His-355. 2 residues coordinate Zn(2+): Cys-363 and Cys-366. Lys-369 is modified (N6-acetyllysine). The Zn(2+) site is built by Cys-387 and Cys-390. 2 positions are modified to S-nitrosocysteine: Cys-387 and Cys-390. Lys-422 carries the N6-acetyllysine modification. The Nuclear export signal motif lies at 425-431 (VDLLIVI). Residues 432 to 434 (GSS), 457 to 459 (NRE), and Cys-474 contribute to the NAD(+) site. Lys-505 is modified (N6-acetyllysine). The tract at residues 514–539 (VHLSELPPTPLHISEDSSSPERTVPQ) is disordered. Thr-522 is modified (phosphothreonine; by DYRK1A, DYRK3 and MAPK8). The residue at position 527 (Ser-527) is a Phosphoserine. Residues 529–539 (DSSSPERTVPQ) show a composition bias toward polar residues. Thr-536 is subject to Phosphothreonine. Lys-600 is subject to N6-acetyllysine. Residues Ser-649 and Ser-651 each carry the phosphoserine; by CaMK2 modification. Residues 653–713 (DDVLSSSSCG…GSGFGADGGD (61 aa)) form a disordered region. Over residues 656–676 (LSSSSCGSNSDSGTCQSPSLE) the composition is skewed to low complexity. Residues 677 to 697 (EPLEDESEIEEFYNGLEDDTE) show a composition bias toward acidic residues. Position 737 is a phosphoserine (Ser-737).

The protein belongs to the sirtuin family. Class I subfamily. As to quaternary structure, interacts with XBP1 isoform 2. Found in a complex with PCAF and MYOD1 Component of the eNoSC complex, composed of SIRT1, SUV39H1 and RRP8. Interacts with HES1, HEY2 and PML. Interacts with RPS19BP1/AROS. Interacts with CCAR2 (via N-terminus); the interaction disrupts the interaction between SIRT1 and p53/TP53. Interacts with SETD7; the interaction induces the dissociation of SIRT1 from p53/TP53 and increases p53/TP53 activity. Interacts with MYCN, NR1I2, CREBZF, TSC2, TLE1, FOS, JUN, NR0B2, PPARG, NCOR, IRS1, IRS2 and NMNAT1. Interacts with HNF1A; the interaction occurs under nutrient restriction. Interacts with SUZ12; the interaction mediates the association with the PRC4 histone methylation complex which is specific as an association with PCR2 and PCR3 complex variants is not found. Interacts with FOXO1; the interaction deacetylates FOXO1, enhances its DNA-binding ability and increases its transcriptional activity. Interacts with BCL6; leads to a epigenetic repression of specific target genes. Interacts with CLOCK, BMAL1 and PER2. Interacts with PPARA; the interaction seems to be modulated by NAD(+) levels. Interacts with NR1H3 and this interaction is inhibited in the presence of CCAR2. Interacts with CHEK2 and p53/TP53. Exhibits a preferential interaction with sumoylated CCAR2 over its unmodified form. Interacts with PACS2. Interacts with SIRT7. Interacts with PUS7. Interacts with TULP3. Interacts with MORN3; the interaction enhances the ubiquitination of p53/TP53. Zn(2+) is required as a cofactor. In terms of processing, methylated on multiple lysine residues; methylation is enhanced after DNA damage and is dispensable for deacetylase activity toward p53/TP53. Post-translationally, phosphorylated. Phosphorylated by STK4/MST1, resulting in inhibition of SIRT1-mediated p53/TP53 deacetylation. Phosphorylation by MAPK8/JNK1 at Ser-46 and Thr-522 leads to increased nuclear localization and enzymatic activity. Phosphorylation at Thr-522 by DYRK1A and DYRK3 activates deacetylase activity and promotes cell survival. Phosphorylation by mammalian target of rapamycin complex 1 (mTORC1) at Ser-46 inhibits deacetylation activity. Phosphorylated by CaMK2, leading to increased p53/TP53 and NF-kappa-B p65/RELA deacetylation activity. Proteolytically cleaved by cathepsin B upon TNF-alpha treatment to yield catalytic inactive but stable SirtT1 75 kDa fragment (75SirT1). In terms of processing, S-nitrosylated by GAPDH, leading to inhibit the NAD-dependent protein deacetylase activity. Post-translationally, acetylated at various Lys residues. Deacetylated via an autocatalytic mechanism. Autodeacetylation at Lys-230 promotes its protein deacetylase activity. Ubiquitinated; leading to degradation. Deubiquitinated by USP22; leading to stabilization. As to expression, widely expressed. Weakly expressed in liver and skeletal muscle.

It localises to the nucleus. It is found in the PML body. The protein localises to the cytoplasm. Its subcellular location is the mitochondrion. It carries out the reaction N(6)-acetyl-L-lysyl-[protein] + NAD(+) + H2O = 2''-O-acetyl-ADP-D-ribose + nicotinamide + L-lysyl-[protein]. The catalysed reaction is N(6)-propanoyl-L-lysyl-[protein] + NAD(+) + H2O = 3''-O-propanoyl-ADP-D-ribose + nicotinamide + L-lysyl-[protein]. The enzyme catalyses N(6)-(2E)-butenoyl-L-lysyl-[protein] + NAD(+) + H2O = 2''-O-(2E)-but-2-enoyl-ADP-D-ribose + nicotinamide + L-lysyl-[protein]. It catalyses the reaction N(6)-[(S)-lactoyl]-L-lysyl-[protein] + NAD(+) + H2O = 2''-O-(S)-lactoyl-ADP-D-ribose + nicotinamide + L-lysyl-[protein]. With respect to regulation, activated by resveratrol (3,5,4'-trihydroxy-trans-stilbene), butein (3,4,2',4'-tetrahydroxychalcone), piceatannol (3,5,3',4'-tetrahydroxy-trans-stilbene), Isoliquiritigenin (4,2',4'-trihydroxychalcone), fisetin (3,7,3',4'-tetrahydroxyflavone) and quercetin (3,5,7,3',4'-pentahydroxyflavone). MAPK8/JNK1 and RPS19BP1/AROS act as positive regulators of deacetylation activity. Inhibited by nicotinamide. Negatively regulated by CCAR2. Functionally, NAD-dependent protein deacetylase that links transcriptional regulation directly to intracellular energetics and participates in the coordination of several separated cellular functions such as cell cycle, response to DNA damage, metabolism, apoptosis and autophagy. Can modulate chromatin function through deacetylation of histones and can promote alterations in the methylation of histones and DNA, leading to transcriptional repression. Deacetylates a broad range of transcription factors and coregulators, thereby regulating target gene expression positively and negatively. Serves as a sensor of the cytosolic ratio of NAD(+)/NADH which is altered by glucose deprivation and metabolic changes associated with caloric restriction. Is essential in skeletal muscle cell differentiation and in response to low nutrients mediates the inhibitory effect on skeletal myoblast differentiation which also involves 5'-AMP-activated protein kinase (AMPK) and nicotinamide phosphoribosyltransferase (NAMPT). Component of the eNoSC (energy-dependent nucleolar silencing) complex, a complex that mediates silencing of rDNA in response to intracellular energy status and acts by recruiting histone-modifying enzymes. The eNoSC complex is able to sense the energy status of cell: upon glucose starvation, elevation of NAD(+)/NADP(+) ratio activates SIRT1, leading to histone H3 deacetylation followed by dimethylation of H3 at 'Lys-9' (H3K9me2) by SUV39H1 and the formation of silent chromatin in the rDNA locus. Deacetylates 'Lys-266' of SUV39H1, leading to its activation. Inhibits skeletal muscle differentiation by deacetylating PCAF and MYOD1. Deacetylates H2A and 'Lys-26' of H1-4. Deacetylates 'Lys-16' of histone H4 (in vitro). Involved in NR0B2/SHP corepression function through chromatin remodeling: Recruited to LRH1 target gene promoters by NR0B2/SHP thereby stimulating histone H3 and H4 deacetylation leading to transcriptional repression. Proposed to contribute to genomic integrity via positive regulation of telomere length; however, reports on localization to pericentromeric heterochromatin are conflicting. Proposed to play a role in constitutive heterochromatin (CH) formation and/or maintenance through regulation of the available pool of nuclear SUV39H1. Upon oxidative/metabolic stress decreases SUV39H1 degradation by inhibiting SUV39H1 polyubiquitination by MDM2. This increase in SUV39H1 levels enhances SUV39H1 turnover in CH, which in turn seems to accelerate renewal of the heterochromatin which correlates with greater genomic integrity during stress response. Deacetylates 'Lys-382' of p53/TP53 and impairs its ability to induce transcription-dependent proapoptotic program and modulate cell senescence. Deacetylates TAF1B and thereby represses rDNA transcription by the RNA polymerase I. Deacetylates MYC, promotes the association of MYC with MAX and decreases MYC stability leading to compromised transformational capability. Deacetylates FOXO3 in response to oxidative stress thereby increasing its ability to induce cell cycle arrest and resistance to oxidative stress but inhibiting FOXO3-mediated induction of apoptosis transcriptional activity; also leading to FOXO3 ubiquitination and protesomal degradation. Appears to have a similar effect on MLLT7/FOXO4 in regulation of transcriptional activity and apoptosis. Deacetylates DNMT1; thereby impairs DNMT1 methyltransferase-independent transcription repressor activity, modulates DNMT1 cell cycle regulatory function and DNMT1-mediated gene silencing. Deacetylates RELA/NF-kappa-B p65 thereby inhibiting its transactivating potential and augments apoptosis in response to TNF-alpha. Deacetylates HIF1A, KAT5/TIP60, RB1 and HIC1. Deacetylates FOXO1, which increases its DNA binding ability and enhances its transcriptional activity leading to increased gluconeogenesis in liver. Inhibits E2F1 transcriptional activity and apoptotic function, possibly by deacetylation. Involved in HES1- and HEY2-mediated transcriptional repression. In cooperation with MYCN seems to be involved in transcriptional repression of DUSP6/MAPK3 leading to MYCN stabilization by phosphorylation at 'Ser-62'. Deacetylates MEF2D. Required for antagonist-mediated transcription suppression of AR-dependent genes which may be linked to local deacetylation of histone H3. Represses HNF1A-mediated transcription. Required for the repression of ESRRG by CREBZF. Deacetylates NR1H3 and NR1H2 and deacetylation of NR1H3 at 'Lys-434' positively regulates transcription of NR1H3:RXR target genes, promotes NR1H3 proteasomal degradation and results in cholesterol efflux; a promoter clearing mechanism after reach round of transcription is proposed. Involved in lipid metabolism: deacetylates LPIN1, thereby inhibiting diacylglycerol synthesis. Implicated in regulation of adipogenesis and fat mobilization in white adipocytes by repression of PPARG which probably involves association with NCOR1 and SMRT/NCOR2. Deacetylates p300/EP300 and PRMT1. Deacetylates ACSS2 leading to its activation, and HMGCS1 deacetylation. Involved in liver and muscle metabolism. Through deacetylation and activation of PPARGC1A is required to activate fatty acid oxidation in skeletal muscle under low-glucose conditions and is involved in glucose homeostasis. Involved in regulation of PPARA and fatty acid beta-oxidation in liver. Involved in positive regulation of insulin secretion in pancreatic beta cells in response to glucose; the function seems to imply transcriptional repression of UCP2. Proposed to deacetylate IRS2 thereby facilitating its insulin-induced tyrosine phosphorylation. Deacetylates SREBF1 isoform SREBP-1C thereby decreasing its stability and transactivation in lipogenic gene expression. Involved in DNA damage response by repressing genes which are involved in DNA repair, such as XPC and TP73, deacetylating XRCC6/Ku70, and facilitating recruitment of additional factors to sites of damaged DNA, such as SIRT1-deacetylated NBN can recruit ATM to initiate DNA repair and SIRT1-deacetylated XPA interacts with RPA2. Also involved in DNA repair of DNA double-strand breaks by homologous recombination and specifically single-strand annealing independently of XRCC6/Ku70 and NBN. Promotes DNA double-strand breaks by mediating deacetylation of SIRT6. Transcriptional suppression of XPC probably involves an E2F4:RBL2 suppressor complex and protein kinase B (AKT) signaling. Transcriptional suppression of TP73 probably involves E2F4 and PCAF. Deacetylates WRN thereby regulating its helicase and exonuclease activities and regulates WRN nuclear translocation in response to DNA damage. Deacetylates APEX1 at 'Lys-6' and 'Lys-7' and stimulates cellular AP endonuclease activity by promoting the association of APEX1 to XRCC1. Catalyzes deacetylation of ERCC4/XPF, thereby impairing interaction with ERCC1 and nucleotide excision repair (NER). Increases p53/TP53-mediated transcription-independent apoptosis by blocking nuclear translocation of cytoplasmic p53/TP53 and probably redirecting it to mitochondria. Deacetylates XRCC6/Ku70 at 'Lys-537' and 'Lys-540' causing it to sequester BAX away from mitochondria thereby inhibiting stress-induced apoptosis. Is involved in autophagy, presumably by deacetylating ATG5, ATG7 and MAP1LC3B/ATG8. Deacetylates AKT1 which leads to enhanced binding of AKT1 and PDK1 to PIP3 and promotes their activation. Proposed to play role in regulation of STK11/LBK1-dependent AMPK signaling pathways implicated in cellular senescence which seems to involve the regulation of the acetylation status of STK11/LBK1. Can deacetylate STK11/LBK1 and thereby increase its activity, cytoplasmic localization and association with STRAD; however, the relevance of such activity in normal cells is unclear. In endothelial cells is shown to inhibit STK11/LBK1 activity and to promote its degradation. Deacetylates SMAD7 at 'Lys-64' and 'Lys-70' thereby promoting its degradation. Deacetylates CIITA and augments its MHC class II transactivation and contributes to its stability. Deacetylates MECOM/EVI1. Deacetylates PML at 'Lys-487' and this deacetylation promotes PML control of PER2 nuclear localization. During the neurogenic transition, represses selective NOTCH1-target genes through histone deacetylation in a BCL6-dependent manner and leading to neuronal differentiation. Regulates the circadian expression of several core clock genes, including BMAL1, RORC, PER2 and CRY1 and plays a critical role in maintaining a controlled rhythmicity in histone acetylation, thereby contributing to circadian chromatin remodeling. Deacetylates BMAL1 and histones at the circadian gene promoters in order to facilitate repression by inhibitory components of the circadian oscillator. Deacetylates PER2, facilitating its ubiquitination and degradation by the proteasome. Protects cardiomyocytes against palmitate-induced apoptosis. Deacetylates XBP1 isoform 2; deacetylation decreases protein stability of XBP1 isoform 2 and inhibits its transcriptional activity. Deacetylates PCK1 and directs its activity toward phosphoenolpyruvate production promoting gluconeogenesis. Involved in the CCAR2-mediated regulation of PCK1 and NR1D1. Deacetylates CTNB1 at 'Lys-49'. In POMC (pro-opiomelanocortin) neurons, required for leptin-induced activation of PI3K signaling. Deacetylates SOX9; promoting SOX9 nuclear localization and transactivation activity. Involved in the regulation of centrosome duplication: Deacetylates CENATAC in G1 phase, allowing for SASS6 accumulation on the centrosome and subsequent procentriole assembly. Deacetylates NDC80/HEC1. In addition to protein deacetylase activity, also acts as a protein-lysine deacylase by mediating protein delactylation, depropionylation and decrotonylation. Mediates depropionylation of Osterix (SP7). Catalyzes decrotonylation of histones; it however does not represent a major histone decrotonylase. Mediates protein delactylation of TEAD1 and YAP1. Its function is as follows. Deacetylates 'Lys-382' of p53/TP53, however with lower activity than isoform 1. In combination, the two isoforms exert an additive effect. Isoform 2 regulates p53/TP53 expression and cellular stress response and is in turn repressed by p53/TP53 presenting a SIRT1 isoform-dependent auto-regulatory loop. Catalytically inactive 75SirT1 may be involved in regulation of apoptosis. May be involved in protecting chondrocytes from apoptotic death by associating with cytochrome C and interfering with apoptosome assembly. This chain is NAD-dependent protein deacetylase sirtuin-1 (Sirt1), found in Mus musculus (Mouse).